Reading from the N-terminus, the 203-residue chain is Peptide deformylase (203 aa).

Residues Cys-121 and His-163 each contribute to the Fe cation site. Residue Glu-164 is part of the active site. His-167 is a Fe cation binding site.

It belongs to the polypeptide deformylase family. It depends on Fe(2+) as a cofactor.

The enzyme catalyses N-terminal N-formyl-L-methionyl-[peptide] + H2O = N-terminal L-methionyl-[peptide] + formate. Functionally, removes the formyl group from the N-terminal Met of newly synthesized proteins. Requires at least a dipeptide for an efficient rate of reaction. N-terminal L-methionine is a prerequisite for activity but the enzyme has broad specificity at other positions. In Prochlorococcus marinus (strain MIT 9515), this protein is Peptide deformylase.